Here is a 124-residue protein sequence, read N- to C-terminus: MFAVIKTGGKQYRVAANDVITIEKLDGAAGDKIEFTEILMVGAGADATIGAPFVEGAVVSAEVVDHGRAKKVIAFKKRRRQNSKRTRGHRQHHTIVRILDIAAAGGKAKKASKKAEAAAEEAAN.

Belongs to the bacterial ribosomal protein bL21 family. As to quaternary structure, part of the 50S ribosomal subunit. Contacts protein L20.

Its function is as follows. This protein binds to 23S rRNA in the presence of protein L20. The sequence is that of Large ribosomal subunit protein bL21 from Sinorhizobium medicae (strain WSM419) (Ensifer medicae).